The primary structure comprises 151 residues: Probable ubiquitin-conjugating enzyme E2 W-A (151 aa).

In terms of domain architecture, UBC core spans 3–151 (SMQKRLQKEL…TKWWYHDDTC (149 aa)). The active-site Glycyl thioester intermediate is cysteine 91.

The protein belongs to the ubiquitin-conjugating enzyme family.

It is found in the nucleus. The enzyme catalyses S-ubiquitinyl-[E1 ubiquitin-activating enzyme]-L-cysteine + [E2 ubiquitin-conjugating enzyme]-L-cysteine = [E1 ubiquitin-activating enzyme]-L-cysteine + S-ubiquitinyl-[E2 ubiquitin-conjugating enzyme]-L-cysteine.. The catalysed reaction is S-ubiquitinyl-[E1 ubiquitin-activating enzyme]-L-cysteine + [acceptor protein]-N-terminal-amino acid = [E1 ubiquitin-activating enzyme]-L-cysteine + N-terminal-ubiquitinyl-[acceptor protein].. It participates in protein modification; protein ubiquitination. Accepts ubiquitin from the E1 complex and catalyzes its covalent attachment to other proteins. Catalyzes monoubiquitination. Involved in degradation of misfolded chaperone substrate and DNA repair. This chain is Probable ubiquitin-conjugating enzyme E2 W-A (ube2wa), found in Danio rerio (Zebrafish).